Consider the following 633-residue polypeptide: tRNA uridine 5-carboxymethylaminomethyl modification enzyme MnmG (633 aa).

Residue glycine 18–glycine 23 participates in FAD binding. The disordered stretch occupies residues proline 208–phenylalanine 232. Basic and acidic residues predominate over residues aspartate 216–proline 229. Residue glycine 279–phenylalanine 293 participates in NAD(+) binding.

This sequence belongs to the MnmG family. In terms of assembly, homodimer. Heterotetramer of two MnmE and two MnmG subunits. FAD serves as cofactor.

Its subcellular location is the cytoplasm. NAD-binding protein involved in the addition of a carboxymethylaminomethyl (cmnm) group at the wobble position (U34) of certain tRNAs, forming tRNA-cmnm(5)s(2)U34. This is tRNA uridine 5-carboxymethylaminomethyl modification enzyme MnmG from Lacticaseibacillus paracasei (strain ATCC 334 / BCRC 17002 / CCUG 31169 / CIP 107868 / KCTC 3260 / NRRL B-441) (Lactobacillus paracasei).